The primary structure comprises 491 residues: Cobyric acid synthase (491 aa).

The GATase cobBQ-type domain occupies Glu250 to Trp439. Residue Cys331 is the Nucleophile of the active site. The active site involves His431.

The protein belongs to the CobB/CobQ family. CobQ subfamily.

The protein operates within cofactor biosynthesis; adenosylcobalamin biosynthesis. Its function is as follows. Catalyzes amidations at positions B, D, E, and G on adenosylcobyrinic A,C-diamide. NH(2) groups are provided by glutamine, and one molecule of ATP is hydrogenolyzed for each amidation. This Microcystis aeruginosa (strain NIES-843 / IAM M-2473) protein is Cobyric acid synthase.